The following is a 449-amino-acid chain: Signal recognition particle protein (449 aa).

Residues 109–116 (GLQGSGKT), 191–195 (DTAGR), and 249–252 (SRID) contribute to the GTP site.

Belongs to the GTP-binding SRP family. SRP54 subfamily. As to quaternary structure, part of the signal recognition particle protein translocation system, which is composed of SRP and FtsY. SRP is a ribonucleoprotein composed of Ffh and a 4.5S RNA molecule.

The protein resides in the cytoplasm. It catalyses the reaction GTP + H2O = GDP + phosphate + H(+). Its function is as follows. Involved in targeting and insertion of nascent membrane proteins into the cytoplasmic membrane. Binds to the hydrophobic signal sequence of the ribosome-nascent chain (RNC) as it emerges from the ribosomes. The SRP-RNC complex is then targeted to the cytoplasmic membrane where it interacts with the SRP receptor FtsY. Interaction with FtsY leads to the transfer of the RNC complex to the Sec translocase for insertion into the membrane, the hydrolysis of GTP by both Ffh and FtsY, and the dissociation of the SRP-FtsY complex into the individual components. This is Signal recognition particle protein from Rickettsia felis (strain ATCC VR-1525 / URRWXCal2) (Rickettsia azadi).